The following is a 319-amino-acid chain: sn-1-specific diacylglycerol lipase ABHD11 (319 aa).

Residues Met-1–Tyr-28 constitute a mitochondrion transit peptide. The AB hydrolase-1 domain maps to Pro-69–Lys-304. Residues Ser-143, Glu-239, and His-298 each act as charge relay system in the active site.

It belongs to the AB hydrolase superfamily. Phosphorylated.

It is found in the mitochondrion. It localises to the mitochondrion matrix. The catalysed reaction is 1-octadecanoyl-2-(5Z,8Z,11Z,14Z-eicosatetraenoyl)-sn-glycerol + H2O = 2-(5Z,8Z,11Z,14Z-eicosatetraenoyl)-glycerol + octadecanoate + H(+). It catalyses the reaction a 1,2-diacyl-sn-glycerol + H2O = a 2-acylglycerol + a fatty acid + H(+). The enzyme catalyses a 1,3-diacyl-sn-glycerol + H2O = a 1-acyl-sn-glycerol + a fatty acid + H(+). It carries out the reaction 1-octadecanoyl-2-(9Z-octadecenoyl)-sn-glycerol + H2O = 2-(9Z-octadecenoyl)-glycerol + octadecanoate + H(+). The catalysed reaction is 1-octadecanoyl-2-(4Z,7Z,10Z,13Z,16Z,19Z-docosahexaenoyl)-sn-glycerol + H2O = 2-(4Z,7Z,10Z,13Z,16Z,19Z-docosahexaenoyl)-glycerol + octadecanoate + H(+). It catalyses the reaction 1,2-didecanoylglycerol + H2O = decanoylglycerol + decanoate + H(+). In terms of biological role, catalyzes the hydrolysis of diacylglycerol in vitro and may function as a key regulator in lipid metabolism, namely by regulating the intracellular levels of diacylglycerol. 1,2-diacyl-sn-glycerols are the preferred substrate over 1,3-diacyl-sn-glycerols. The enzyme hydrolyzes stearate in preference to palmitate from the sn-1 position of 1,2-diacyl-sn-glycerols. This is sn-1-specific diacylglycerol lipase ABHD11 from Xenopus tropicalis (Western clawed frog).